Reading from the N-terminus, the 904-residue chain is Alanine--tRNA ligase (904 aa).

The Zn(2+) site is built by H584, H588, C687, and H691.

This sequence belongs to the class-II aminoacyl-tRNA synthetase family. Zn(2+) serves as cofactor.

Its subcellular location is the cytoplasm. The catalysed reaction is tRNA(Ala) + L-alanine + ATP = L-alanyl-tRNA(Ala) + AMP + diphosphate. Functionally, catalyzes the attachment of alanine to tRNA(Ala) in a two-step reaction: alanine is first activated by ATP to form Ala-AMP and then transferred to the acceptor end of tRNA(Ala). Also edits incorrectly charged Ser-tRNA(Ala) and Gly-tRNA(Ala) via its editing domain. In Mycobacterium bovis (strain ATCC BAA-935 / AF2122/97), this protein is Alanine--tRNA ligase.